We begin with the raw amino-acid sequence, 313 residues long: Putative S-adenosyl-L-methionine-dependent methyltransferase MAV_5149 (313 aa).

S-adenosyl-L-methionine is bound by residues aspartate 135 and 164 to 165 (DL).

The protein belongs to the UPF0677 family.

Exhibits S-adenosyl-L-methionine-dependent methyltransferase activity. In Mycobacterium avium (strain 104), this protein is Putative S-adenosyl-L-methionine-dependent methyltransferase MAV_5149.